We begin with the raw amino-acid sequence, 323 residues long: Thymidylate synthase (323 aa).

DUMP is bound by residues R21 and 172–173 (RR). C192 serves as the catalytic Nucleophile. Residues 214–217 (RSND), N225, and 255–257 (HVY) each bind dUMP. Residue D217 coordinates (6R)-5,10-methylene-5,6,7,8-tetrahydrofolate. Residue A322 participates in (6R)-5,10-methylene-5,6,7,8-tetrahydrofolate binding.

This sequence belongs to the thymidylate synthase family. Bacterial-type ThyA subfamily. Homodimer.

The protein localises to the cytoplasm. It catalyses the reaction dUMP + (6R)-5,10-methylene-5,6,7,8-tetrahydrofolate = 7,8-dihydrofolate + dTMP. The protein operates within pyrimidine metabolism; dTTP biosynthesis. Its function is as follows. Catalyzes the reductive methylation of 2'-deoxyuridine-5'-monophosphate (dUMP) to 2'-deoxythymidine-5'-monophosphate (dTMP) while utilizing 5,10-methylenetetrahydrofolate (mTHF) as the methyl donor and reductant in the reaction, yielding dihydrofolate (DHF) as a by-product. This enzymatic reaction provides an intracellular de novo source of dTMP, an essential precursor for DNA biosynthesis. This chain is Thymidylate synthase, found in Pseudomonas putida (strain ATCC 47054 / DSM 6125 / CFBP 8728 / NCIMB 11950 / KT2440).